The sequence spans 384 residues: Cyanate transport protein CynX (384 aa).

The next 12 helical transmembrane spans lie at 3-23 (LVLV…GPLL), 34-54 (FSVA…LALA), 68-88 (VAIS…YPQS), 89-109 (ALLL…QAVM), 122-142 (PLVM…GAAI), 153-173 (WYQT…AWWW), 204-224 (YFGL…AFYI), 235-255 (SLLA…PAMA), 263-283 (LLML…WLPM), 287-307 (VLWA…CLLL), 322-342 (VAFM…FSGV), and 354-374 (WAFH…FAPV).

The protein belongs to the major facilitator superfamily. Cyanate porter (TC 2.A.1.17) family.

It is found in the cell inner membrane. Its function is as follows. This protein is part of an active transport system that transports exogenous cyanate into E.coli cells. The sequence is that of Cyanate transport protein CynX (cynX) from Escherichia coli (strain K12).